The sequence spans 138 residues: Cysteine desulfuration protein SufE (138 aa).

Residue Cys51 is the Cysteine persulfide intermediate of the active site.

Belongs to the SufE family. In terms of assembly, homodimer. Interacts with SufS.

The protein resides in the cytoplasm. It functions in the pathway cofactor biosynthesis; iron-sulfur cluster biosynthesis. Its function is as follows. Participates in cysteine desulfuration mediated by SufS. Cysteine desulfuration mobilizes sulfur from L-cysteine to yield L-alanine and constitutes an essential step in sulfur metabolism for biosynthesis of a variety of sulfur-containing biomolecules. Functions as a sulfur acceptor for SufS, by mediating the direct transfer of the sulfur atom from the S-sulfanylcysteine of SufS, an intermediate product of cysteine desulfuration process. The protein is Cysteine desulfuration protein SufE of Klebsiella pneumoniae (strain 342).